The sequence spans 443 residues: MAASPHTLSSRLLTGCVGGCVWYLERRTIQDSPHKFLHLLRNVNKQWITFQHFNFLKRMYVTQLNRSHNQQVRPKPEPVASPFLEKTSSGQAKAEIYEMRPLSPPSLSLSRKPNEKELIELEPASVIEDSIDVGKERKEEKRWKEMKLQVYDLPGILARLSKIKLTALVVSTTAAGFALAPGPFDWPCFLLTSVGTGLASCAANSINQFFEVPFDSNMNRTKNRPLVRGQISPLLAVSFATCCAVPGVAILTLGVNPLTGALGLFNIFLYTCCYTPLKRISIANTWVGAVVGAIPPVMGWTAATGSLDAGAFLLGGILYSWQFPHFNALSWGLREGYSRGGYCMMSVTHPGLCRRVALRHCLALLVLSAAAPVLDITTWTFPIMALPINAYISYLGFRFYVDADRRSSRRLFFCSLWHLPLLLLLMLTCKRPRGGGDAGPPPS.

The next 7 helical transmembrane spans lie at 174–194 (AAGF…LTSV), 235–255 (LAVS…TLGV), 257–277 (PLTG…YTPL), 280–300 (ISIA…VMGW), 309–329 (AGAF…FNAL), 364–384 (LLVL…FPIM), and 411–431 (LFFC…TCKR).

It belongs to the UbiA prenyltransferase family.

The protein localises to the mitochondrion membrane. It catalyses the reaction heme b + (2E,6E)-farnesyl diphosphate + H2O = Fe(II)-heme o + diphosphate. Functionally, converts protoheme IX and farnesyl diphosphate to heme O. This is Protoheme IX farnesyltransferase, mitochondrial (COX10) from Pongo abelii (Sumatran orangutan).